A 195-amino-acid polypeptide reads, in one-letter code: Probable DNA-directed RNA polymerase subunit delta (195 aa).

The HTH HARE-type domain maps to leucine 14 to tryptophan 83. Composition is skewed to acidic residues over residues glycine 119–glutamate 138 and tyrosine 145–glutamate 195. The disordered stretch occupies residues glycine 119–glutamate 195.

It belongs to the RpoE family. In terms of assembly, RNAP is composed of a core of 2 alpha, a beta and a beta' subunits. The core is associated with a delta subunit and one of several sigma factors.

In terms of biological role, participates in both the initiation and recycling phases of transcription. In the presence of the delta subunit, RNAP displays an increased specificity of transcription, a decreased affinity for nucleic acids, and an increased efficiency of RNA synthesis because of enhanced recycling. This Streptococcus gordonii (strain Challis / ATCC 35105 / BCRC 15272 / CH1 / DL1 / V288) protein is Probable DNA-directed RNA polymerase subunit delta.